Here is a 227-residue protein sequence, read N- to C-terminus: Threonine--tRNA ligase (227 aa).

Positions 1–120 are catalytic; the sequence is DIELKLSTRP…LIEHYEGAFP (120 aa).

It belongs to the class-II aminoacyl-tRNA synthetase family. As to quaternary structure, homodimer.

Its subcellular location is the cytoplasm. It catalyses the reaction tRNA(Thr) + L-threonine + ATP = L-threonyl-tRNA(Thr) + AMP + diphosphate + H(+). In terms of biological role, catalyzes the attachment of threonine to tRNA(Thr) in a two-step reaction: L-threonine is first activated by ATP to form Thr-AMP and then transferred to the acceptor end of tRNA(Thr). Also edits incorrectly charged L-seryl-tRNA(Thr). The polypeptide is Threonine--tRNA ligase (Pseudomonas syringae pv. syringae).